The chain runs to 230 residues: 2,3-bisphosphoglycerate-dependent phosphoglycerate mutase (230 aa).

Substrate-binding positions include 8–15, 21–22, R60, 87–90, K98, 114–115, and 183–184; these read RHGESEWN, TG, ERHY, RR, and GN. H9 functions as the Tele-phosphohistidine intermediate in the catalytic mechanism. E87 serves as the catalytic Proton donor/acceptor.

Belongs to the phosphoglycerate mutase family. BPG-dependent PGAM subfamily.

It catalyses the reaction (2R)-2-phosphoglycerate = (2R)-3-phosphoglycerate. It functions in the pathway carbohydrate degradation; glycolysis; pyruvate from D-glyceraldehyde 3-phosphate: step 3/5. Its function is as follows. Catalyzes the interconversion of 2-phosphoglycerate and 3-phosphoglycerate. The sequence is that of 2,3-bisphosphoglycerate-dependent phosphoglycerate mutase from Streptococcus sanguinis (strain SK36).